The sequence spans 465 residues: Argininosuccinate lyase (465 aa).

The protein belongs to the lyase 1 family. Argininosuccinate lyase subfamily.

Its subcellular location is the cytoplasm. The enzyme catalyses 2-(N(omega)-L-arginino)succinate = fumarate + L-arginine. It participates in amino-acid biosynthesis; L-arginine biosynthesis; L-arginine from L-ornithine and carbamoyl phosphate: step 3/3. In Rhodopseudomonas palustris (strain HaA2), this protein is Argininosuccinate lyase.